Here is a 261-residue protein sequence, read N- to C-terminus: Vacuolar protein sorting-associated protein 37D (261 aa).

The VPS37 C-terminal domain maps to 93–182 (AENCADKLQR…RRRERSAQPA (90 aa)). The interval 172-261 (LRRRERSAQP…RPSQPEPPHR (90 aa)) is disordered. Over residues 181–195 (PAPTTAAAAAAAATA) the composition is skewed to low complexity. 2 stretches are compositionally biased toward pro residues: residues 215–224 (GPPPAVPRSL) and 231–261 (PVPP…PPHR).

It belongs to the VPS37 family. In terms of assembly, component of the ESCRT-I complex (endosomal sorting complex required for transport I) which consists of TSG101, VPS28, a VPS37 protein (VPS37A to -D) and MVB12A or MVB12B in a 1:1:1:1 stoichiometry. Interacts with TSG101 and MVB12A. Component of the ESCRT-I complex (endosomal sorting complex required for transport I) which consists of TSG101, VPS28, a VPS37 protein (VPS37A to -D) and UBAP1 in a 1:1:1:1 stoichiometry.

Its subcellular location is the late endosome membrane. Component of the ESCRT-I complex, a regulator of vesicular trafficking process. Required for the sorting of endocytic ubiquitinated cargos into multivesicular bodies. May be involved in cell growth and differentiation. The protein is Vacuolar protein sorting-associated protein 37D of Mus musculus (Mouse).